A 341-amino-acid polypeptide reads, in one-letter code: Glycerol-3-phosphate dehydrogenase [NAD(P)+] (341 aa).

Ser-15, Trp-16, Arg-36, and Lys-110 together coordinate NADPH. 3 residues coordinate sn-glycerol 3-phosphate: Lys-110, Gly-139, and Ser-141. Ala-143 provides a ligand contact to NADPH. Positions 194, 247, 257, 258, and 259 each coordinate sn-glycerol 3-phosphate. The Proton acceptor role is filled by Lys-194. Arg-258 contacts NADPH. 2 residues coordinate NADPH: Val-282 and Glu-284.

Belongs to the NAD-dependent glycerol-3-phosphate dehydrogenase family.

Its subcellular location is the cytoplasm. The enzyme catalyses sn-glycerol 3-phosphate + NAD(+) = dihydroxyacetone phosphate + NADH + H(+). The catalysed reaction is sn-glycerol 3-phosphate + NADP(+) = dihydroxyacetone phosphate + NADPH + H(+). It functions in the pathway membrane lipid metabolism; glycerophospholipid metabolism. In terms of biological role, catalyzes the reduction of the glycolytic intermediate dihydroxyacetone phosphate (DHAP) to sn-glycerol 3-phosphate (G3P), the key precursor for phospholipid synthesis. The protein is Glycerol-3-phosphate dehydrogenase [NAD(P)+] of Xanthomonas campestris pv. campestris (strain 8004).